A 388-amino-acid chain; its full sequence is Galactokinase (388 aa).

33–36 provides a ligand contact to substrate; sequence EHTD. Residues Ser67 and 124-130 contribute to the ATP site; that span reads GAGLSSS. Residues Ser130 and Glu162 each contribute to the Mg(2+) site. Residue Asp174 is the Proton acceptor of the active site. Tyr224 serves as a coordination point for substrate.

Belongs to the GHMP kinase family. GalK subfamily.

The protein resides in the cytoplasm. It carries out the reaction alpha-D-galactose + ATP = alpha-D-galactose 1-phosphate + ADP + H(+). The protein operates within carbohydrate metabolism; galactose metabolism. Its function is as follows. Catalyzes the transfer of the gamma-phosphate of ATP to D-galactose to form alpha-D-galactose-1-phosphate (Gal-1-P). The polypeptide is Galactokinase (Lacticaseibacillus paracasei (strain ATCC 334 / BCRC 17002 / CCUG 31169 / CIP 107868 / KCTC 3260 / NRRL B-441) (Lactobacillus paracasei)).